The primary structure comprises 31 residues: Unknown protein from spot 104 of 2D-PAGE of thylakoid (31 aa).

The protein localises to the plastid. The protein resides in the chloroplast thylakoid. The chain is Unknown protein from spot 104 of 2D-PAGE of thylakoid from Pisum sativum (Garden pea).